The following is a 266-amino-acid chain: Vitamin B12-binding protein (266 aa).

Positions 1 to 22 (MAKSLFRALVALSFLAPLWLNA) are cleaved as a signal peptide. A Fe/B12 periplasmic-binding domain is found at 25-266 (RVITLSPANT…QLCNALSQVD (242 aa)). Residues Y50 and 242–246 (DWFER) each bind cyanocob(III)alamin. C183 and C259 are disulfide-bonded.

The protein belongs to the BtuF family. The complex is composed of two ATP-binding proteins (BtuD), two transmembrane proteins (BtuC) and a solute-binding protein (BtuF).

The protein localises to the periplasm. Functionally, part of the ABC transporter complex BtuCDF involved in vitamin B12 import. Binds vitamin B12 and delivers it to the periplasmic surface of BtuC. The protein is Vitamin B12-binding protein of Shigella flexneri.